A 348-amino-acid chain; its full sequence is MFEDQTYESIMDRMLNSISADIDKREGSVIYNALAPVAAELAKSYIWLDTVLELVFSDTAQGEFLDRRATEAGIERTAATKAVRAGEFTEGVTIPVGSRFYVDNLYFQYTADGTLECETAGEAGNANISGQNLLSLDTIPGLQKAIVKEILIPGREEEDDDSLRARYFTRVRREAVSANKAHYKQWAEEVDGVGKVKVFPLWNGDGTVKIVVTNANLEPASDILISKVKNYIDPEPGQGEGQAPIGAFVTVESAVWKEVEISAEVLPEVNSSIDQVKQEIESGVLNLFKKIAFEDNVIRLSQINNIVYNSPSVSDYADIKINGVAENLVLSAVEIPKLGQVNIIEQTR.

The protein belongs to the Mu gp47/PBSX XkdT family.

This is an uncharacterized protein from Bacillus subtilis (strain 168).